The sequence spans 79 residues: Small ribosomal subunit protein bS18 (79 aa).

The protein belongs to the bacterial ribosomal protein bS18 family. Part of the 30S ribosomal subunit. Forms a tight heterodimer with protein bS6.

Functionally, binds as a heterodimer with protein bS6 to the central domain of the 16S rRNA, where it helps stabilize the platform of the 30S subunit. The polypeptide is Small ribosomal subunit protein bS18 (Latilactobacillus sakei subsp. sakei (strain 23K) (Lactobacillus sakei subsp. sakei)).